A 490-amino-acid chain; its full sequence is Trigger factor (490 aa).

A PPIase FKBP-type domain is found at 162 to 243; sequence GDFVSIDLSA…VGSIKERELP (82 aa). The segment at 433–490 is disordered; that stretch reads VDAVLGPRRGGADEAGAEAEAAEEKPAKAKKSADSEKTDKSEKAEKKSKKKSKDDDAE. Residues 454–477 are compositionally biased toward basic and acidic residues; the sequence is AEEKPAKAKKSADSEKTDKSEKAE.

Belongs to the FKBP-type PPIase family. Tig subfamily.

It localises to the cytoplasm. The catalysed reaction is [protein]-peptidylproline (omega=180) = [protein]-peptidylproline (omega=0). Functionally, involved in protein export. Acts as a chaperone by maintaining the newly synthesized protein in an open conformation. Functions as a peptidyl-prolyl cis-trans isomerase. The protein is Trigger factor of Mycobacteroides abscessus (strain ATCC 19977 / DSM 44196 / CCUG 20993 / CIP 104536 / JCM 13569 / NCTC 13031 / TMC 1543 / L948) (Mycobacterium abscessus).